The chain runs to 172 residues: NADH dehydrogenase [ubiquinone] 1 alpha subcomplex subunit 8 (172 aa).

2 CHCH domains span residues 33-74 and 75-118; these read GAQC…FRQI and KRHC…LGWV. Short sequence motifs (cx9C motif) lie at residues 36-46, 56-66, 78-88, and 100-110; these read CDKPNKEFMLC, CLEEGKLVNKC, CAEPFTEYWTC, and CRKQQAKFDEC. 4 disulfides stabilise this stretch: cysteine 36–cysteine 66, cysteine 46–cysteine 56, cysteine 78–cysteine 110, and cysteine 88–cysteine 100. A disordered region spans residues 133 to 164; that stretch reads TDRPLPENPYHSRPRPDPSPEIEGDLQPATHG.

Belongs to the complex I NDUFA8 subunit family. In terms of assembly, complex I is composed of 45 different subunits. Post-translationally, may contain intrachain disulfide bonds, as evidenced by its electrophoretic mobility under reducing vs non-reducing conditions.

The protein resides in the mitochondrion inner membrane. Its subcellular location is the mitochondrion intermembrane space. The protein localises to the mitochondrion. In terms of biological role, accessory subunit of the mitochondrial membrane respiratory chain NADH dehydrogenase (Complex I), that is believed not to be involved in catalysis. Complex I functions in the transfer of electrons from NADH to the respiratory chain. The immediate electron acceptor for the enzyme is believed to be ubiquinone. In Homo sapiens (Human), this protein is NADH dehydrogenase [ubiquinone] 1 alpha subcomplex subunit 8 (NDUFA8).